Here is a 270-residue protein sequence, read N- to C-terminus: uncharacterized protein (270 aa).

This is an uncharacterized protein from Bacillus subtilis (strain 168).